A 165-amino-acid chain; its full sequence is Large ribosomal subunit protein uL11 (165 aa).

This sequence belongs to the universal ribosomal protein uL11 family. Part of the ribosomal stalk of the 50S ribosomal subunit. Interacts with L10 and the large rRNA to form the base of the stalk. L10 forms an elongated spine to which L12 dimers bind in a sequential fashion forming a multimeric L10(L12)X complex.

In terms of biological role, forms part of the ribosomal stalk which helps the ribosome interact with GTP-bound translation factors. This chain is Large ribosomal subunit protein uL11, found in Thermococcus kodakarensis (strain ATCC BAA-918 / JCM 12380 / KOD1) (Pyrococcus kodakaraensis (strain KOD1)).